Here is a 118-residue protein sequence, read N- to C-terminus: Holo-[acyl-carrier-protein] synthase (118 aa).

2 residues coordinate Mg(2+): Asp-8 and Glu-58.

The protein belongs to the P-Pant transferase superfamily. AcpS family. Requires Mg(2+) as cofactor.

It localises to the cytoplasm. It carries out the reaction apo-[ACP] + CoA = holo-[ACP] + adenosine 3',5'-bisphosphate + H(+). Transfers the 4'-phosphopantetheine moiety from coenzyme A to a Ser of acyl-carrier-protein. This chain is Holo-[acyl-carrier-protein] synthase, found in Streptococcus equi subsp. zooepidemicus (strain H70).